We begin with the raw amino-acid sequence, 224 residues long: UPF0758 protein Tbd_2588 (224 aa).

The MPN domain maps to 102–224 (ALSSPAAVRD…ALSFAEAGHL (123 aa)). Residues His-173, His-175, and Asp-186 each contribute to the Zn(2+) site. The JAMM motif motif lies at 173–186 (HNHPSGVNEPSQAD).

Belongs to the UPF0758 family.

This chain is UPF0758 protein Tbd_2588, found in Thiobacillus denitrificans (strain ATCC 25259 / T1).